The primary structure comprises 216 residues: Pyrophosphatase PpaX (216 aa).

Aspartate 9 functions as the Nucleophile in the catalytic mechanism.

The protein belongs to the HAD-like hydrolase superfamily. PpaX family. Mg(2+) is required as a cofactor.

It carries out the reaction diphosphate + H2O = 2 phosphate + H(+). In terms of biological role, hydrolyzes pyrophosphate formed during P-Ser-HPr dephosphorylation by HPrK/P. Might play a role in controlling the intracellular pyrophosphate pool. This chain is Pyrophosphatase PpaX, found in Bacillus cereus (strain G9842).